Here is a 246-residue protein sequence, read N- to C-terminus: Small ribosomal subunit protein uS2 (246 aa).

The tract at residues 224-246 is disordered; that stretch reads AKQGEESAETEAKEAETTETTTA. Residues 225 to 239 show a composition bias toward basic and acidic residues; the sequence is KQGEESAETEAKEAE.

Belongs to the universal ribosomal protein uS2 family.

The polypeptide is Small ribosomal subunit protein uS2 (Bacillus licheniformis (strain ATCC 14580 / DSM 13 / JCM 2505 / CCUG 7422 / NBRC 12200 / NCIMB 9375 / NCTC 10341 / NRRL NRS-1264 / Gibson 46)).